The following is a 342-amino-acid chain: uncharacterized protein (342 aa).

Zn(2+)-binding residues include cysteine 41, histidine 63, cysteine 94, cysteine 97, cysteine 100, cysteine 108, and glutamate 149.

It belongs to the zinc-containing alcohol dehydrogenase family. Zn(2+) is required as a cofactor.

This is an uncharacterized protein from Haemophilus influenzae (strain ATCC 51907 / DSM 11121 / KW20 / Rd).